The chain runs to 372 residues: Cytochrome b (372 aa).

Helical transmembrane passes span 25-45, 69-90, 105-125, and 170-190; these read FGSMLLTCLMLQTITGFFLAL, WIMQNLHAISASLFFVCIYIHI, WLSGTALLITLMATAFFGYVL, and FFALHFILPFIIISLSSIHII. Heme b contacts are provided by His75 and His89. Residues His174 and His188 each coordinate heme b. A ubiquinone is bound at residue His193. A run of 4 helical transmembrane segments spans residues 218–238, 280–300, 312–332, and 339–358; these read YKDMLMATTMITLLFLILSFA, LGGTLALIMSVMILTTMPFTH, LSQILFWTLIATFITITWTAS, and FITISQTTSIIYFFFFITTP.

It belongs to the cytochrome b family. In terms of assembly, the cytochrome bc1 complex contains 3 respiratory subunits (MT-CYB, CYC1 and UQCRFS1), 2 core proteins (UQCRC1 and UQCRC2) and probably 6 low-molecular weight proteins. Heme b is required as a cofactor.

Its subcellular location is the mitochondrion inner membrane. Its function is as follows. Component of the ubiquinol-cytochrome c reductase complex (complex III or cytochrome b-c1 complex) that is part of the mitochondrial respiratory chain. The b-c1 complex mediates electron transfer from ubiquinol to cytochrome c. Contributes to the generation of a proton gradient across the mitochondrial membrane that is then used for ATP synthesis. The protein is Cytochrome b (MT-CYB) of Naja nivea (Cape cobra).